The sequence spans 606 residues: Zinc finger protein 652 (606 aa).

Serine 57 carries the post-translational modification Phosphoserine. A compositionally biased stretch (basic and acidic residues) spans 71–97; sequence HLHETEEQPYFRETRAVSDVHAVKEDR. Disordered stretches follow at residues 71-113 and 130-235; these read HLHE…VSYK and VSKG…APVQ. Over residues 98-109 the composition is skewed to acidic residues; the sequence is ENSDDTEEEEEE. At serine 100 the chain carries Phosphoserine. Residue threonine 103 is modified to Phosphothreonine. Positions 137–149 are enriched in polar residues; the sequence is VSSQSKETPVLKT. The segment covering 152–170 has biased composition (acidic residues); sequence EEEEEESEEEATDDSNDYG. Residues 171 to 183 are compositionally biased toward basic and acidic residues; sequence ENEKQKKKEKIVE. The span at 184–209 shows a compositional bias: low complexity; it reads KVSVTQRRTRRAASVAAATTSPTPRT. 2 positions are modified to phosphoserine: serine 197 and serine 204. The segment at 245 to 268 adopts a C2H2-type 1 zinc-finger fold; sequence LTCEKCPRVFNTRWYLEKHMNVTH. The C2H2-type 2; degenerate zinc finger occupies 272 to 294; the sequence is QICDKCGKKFVLESELSLHQQTD. 6 consecutive C2H2-type zinc fingers follow at residues 299–322, 329–351, 357–379, 385–407, 413–435, and 441–463; these read IQCV…KIVH, FSCE…MVAH, FTCE…SLQH, FRCE…MSIH, FMCQ…MKTH, and FICE…RRTH. Residues 469 to 492 form a C2H2-type 9; degenerate zinc finger; that stretch reads YPCDVCGQRFRFSNMLKAHKEKCF. Residues 498-606 are mediates interaction with CBFA2T3; sequence VNVPPAVQIP…AEKNSSAQHH (109 aa).

It belongs to the krueppel C2H2-type zinc-finger protein family. As to quaternary structure, interacts with CBFA2T3. As to expression, widely expressed with higher expression in breast, prostate, vulva and pancreas.

The protein resides in the nucleus. Its function is as follows. Functions as a transcriptional repressor. The protein is Zinc finger protein 652 (ZNF652) of Homo sapiens (Human).